Reading from the N-terminus, the 444-residue chain is Argininosuccinate synthase (444 aa).

ATP-binding positions include 17–25 and Ala43; that span reads AFSGGLDTS. Tyr99 contacts L-citrulline. ATP is bound by residues Gly129 and Thr131. Residues Thr131, Asn135, and Asp136 each coordinate L-aspartate. Asn135 contacts L-citrulline. Position 136 (Asp136) interacts with ATP. Positions 139 and 192 each coordinate L-citrulline. Asp194 is a binding site for ATP. The L-citrulline site is built by Thr201, Glu203, and Glu280.

This sequence belongs to the argininosuccinate synthase family. Type 2 subfamily. As to quaternary structure, homotetramer.

It localises to the cytoplasm. It carries out the reaction L-citrulline + L-aspartate + ATP = 2-(N(omega)-L-arginino)succinate + AMP + diphosphate + H(+). Its pathway is amino-acid biosynthesis; L-arginine biosynthesis; L-arginine from L-ornithine and carbamoyl phosphate: step 2/3. In Delftia acidovorans (strain DSM 14801 / SPH-1), this protein is Argininosuccinate synthase.